Consider the following 154-residue polypeptide: Egg-lysin (154 aa).

Residues 1 to 18 (MKLLVLCIFAMMATLAMS) form the signal peptide.

In terms of assembly, monomer. Homodimer. Molecules associate into dimers and then rapidly dissociate again. Interacts (as a monomer) with the egg vitelline layer protein VERL (via VERL repeats); each VERL chain can bind multiple copies of lysin. As to expression, sperm (at protein level).

It localises to the cytoplasmic vesicle. It is found in the secretory vesicle. Its subcellular location is the acrosome lumen. Creates a 3 um hole in the egg vitelline layer through which the sperm passes. Does not have enzyme activity. Species-specific interaction between the sperm protein lysin and the egg protein VERL exposes a basic surface on lysin that may dissociate the egg vitelline layer via electrostatic repulsion. Plays a role in ensuring species-specific fertilization. The sequence is that of Egg-lysin from Haliotis rufescens (California red abalone).